Reading from the N-terminus, the 85-residue chain is U4-theraphotoxin-Hhn1m (85 aa).

A signal peptide spans 1–22 (MKVTLIAILTCAAVLVLHTTAA). Positions 23 to 48 (EELEAESQLVEVGMPDTELAAVDEER) are excised as a propeptide. 3 disulfide bridges follow: cysteine 52–cysteine 66, cysteine 56–cysteine 77, and cysteine 71–cysteine 82.

The protein belongs to the neurotoxin 12 (Hwtx-2) family. 02 (Hwtx-2) subfamily. In terms of tissue distribution, expressed by the venom gland.

Its subcellular location is the secreted. In terms of biological role, postsynaptic neurotoxin. This Cyriopagopus hainanus (Chinese bird spider) protein is U4-theraphotoxin-Hhn1m.